The primary structure comprises 577 residues: Peroxynitrite isomerase THAP4 (577 aa).

A THAP-type zinc finger spans residues 1–85 (MVICCAAVNC…LKPTAVPSIF (85 aa)). Residues 84–221 (IFHLTEKKRG…DKSGISMDDF (138 aa)) form a disordered region. Over residues 157 to 170 (AAQEAASQEQAQQA) the composition is skewed to low complexity. A Phosphoserine modification is found at S163. Positions 235 to 238 (LHSY) match the HCFC1-binding motif (HBM) motif. Position 239 is a phosphoserine (S239). A disordered region spans residues 240–324 (FSSKHTRERP…AVQSEHSDAS (85 aa)). Residues 247-266 (ERPSVPREPIDRKRLKKDVE) are compositionally biased toward basic and acidic residues. The span at 290-300 (TATPQKPSQSP) shows a compositional bias: low complexity. Positions 415-577 (PPKMNPVVEP…LHVTYKKVTP (163 aa)) are nitrobindin. Residues T444 and H567 each contribute to the heme b site.

In the C-terminal section; belongs to the nitrobindin family. Homodimer. It depends on heme b as a cofactor.

It localises to the cytoplasm. The protein localises to the nucleus. The enzyme catalyses peroxynitrite = nitrate. It participates in nitrogen metabolism. Functionally, heme-binding protein able to scavenge peroxynitrite and to protect free L-tyrosine against peroxynitrite-mediated nitration, by acting as a peroxynitrite isomerase that converts peroxynitrite to nitrate. Therefore, this protein likely plays a role in peroxynitrite sensing and in the detoxification of reactive nitrogen and oxygen species (RNS and ROS, respectively). Is able to bind nitric oxide (NO) in vitro, but may act as a sensor of peroxynitrite levels in vivo, possibly modulating the transcriptional activity residing in the N-terminal region. The polypeptide is Peroxynitrite isomerase THAP4 (Homo sapiens (Human)).